Reading from the N-terminus, the 531-residue chain is Protein SIS2 (531 aa).

Residues 1 to 20 show a composition bias toward basic and acidic residues; sequence MPSDKDIKSPAQPKKEEEIP. 5 disordered regions span residues 1 to 42, 88 to 127, 139 to 168, 180 to 261, and 461 to 531; these read MPSD…ANII, SPDS…KSPS, RPVR…EPSS, SLRA…DPRL, and YPED…TTNL. Residues 155 to 168 are compositionally biased toward polar residues; the sequence is LTPITSPQHSEPSS. Residues 183 to 198 show a composition bias toward low complexity; that stretch reads ATTNSISSAAASNQST. Over residues 204 to 213 the composition is skewed to gly residues; it reads SGGGGGGGGA. Low complexity predominate over residues 214 to 249; it reads NTATSSNSTTSNTALAAQGTTTTTTTTNSNSNTTTT. Acidic residues-rich tracts occupy residues 462–472 and 481–514; these read PEDEDEDEADD and AIID…EEDP.

It belongs to the HFCD (homooligomeric flavin containing Cys decarboxylase) superfamily.

It is found in the nucleus. The protein localises to the cytoplasm. May stimulate expression of certain genes that are periodically expressed during late G1. Also modulates the expression of the ENA1 ATPase. The sequence is that of Protein SIS2 (SIS2) from Candida tropicalis (Yeast).